Consider the following 532-residue polypeptide: Phosphoribosylamine--glycine ligase, chloroplastic (532 aa).

The transit peptide at 1–75 (MSSLCASNCY…IQRRLFLLRC (75 aa)) directs the protein to the chloroplast. The region spanning 204 to 412 (KNLCHKYNIP…LAKVLLAACK (209 aa)) is the ATP-grasp domain.

This sequence belongs to the GARS family.

Its subcellular location is the plastid. It localises to the chloroplast. It carries out the reaction 5-phospho-beta-D-ribosylamine + glycine + ATP = N(1)-(5-phospho-beta-D-ribosyl)glycinamide + ADP + phosphate + H(+). Its pathway is purine metabolism; IMP biosynthesis via de novo pathway; N(1)-(5-phospho-D-ribosyl)glycinamide from 5-phospho-alpha-D-ribose 1-diphosphate: step 2/2. This is Phosphoribosylamine--glycine ligase, chloroplastic (PUR2) from Arabidopsis thaliana (Mouse-ear cress).